The following is a 143-amino-acid chain: MNRRKSREVAMRLLFQTTLNGENLEEALENLKDVRESEEITKEKDYESVDLKDVDIDYVKRIIKGIEENKEEIDEKIKGNLKNWKIERLSKVDLSILRLCTYELKFEEDIPNRVSVNEAIELAKKYSGEKSATFINGVLGKMI.

It belongs to the NusB family.

Functionally, involved in transcription antitermination. Required for transcription of ribosomal RNA (rRNA) genes. Binds specifically to the boxA antiterminator sequence of the ribosomal RNA (rrn) operons. The protein is Transcription antitermination protein NusB of Clostridium botulinum (strain ATCC 19397 / Type A).